Consider the following 217-residue polypeptide: MSTLKEQLTAHVASYDHWAQRRRYGPDGHNNRSLWVLACMDERLPVDEALGIHVDTPAGGGDAHCFRNAGGIVTDDAIRSAMLTCNFFGTKEIVIVQHTQCGMLSGNANEMEKVLREKGMDTDNITLDPTLPELQLAKGAFAKWIGMMDDVDETCMKTINAFKNHPLIPKDIVVSGWVWEVENRRLRAPTLDKEKRARTDCTPTPYGVKGNQPPRWK.

The Zn(2+) site is built by Cys39, His98, and Cys101. The disordered stretch occupies residues 192-217 (DKEKRARTDCTPTPYGVKGNQPPRWK).

It belongs to the beta-class carbonic anhydrase family. As to quaternary structure, forms only homooctamers in solution. Zn(2+) serves as cofactor.

The catalysed reaction is carbon disulfide + 2 H2O = 2 hydrogen sulfide + CO2 + 2 H(+). It participates in sulfur metabolism; hydrogen sulfide biosynthesis. Its function is as follows. Catalyzes the conversion of carbon disulfide into hydrogen sulfide and carbon dioxide, with carbonyl sulfide as an intermediate. Likely plays a key role in sulfur metabolism that allows A.thiooxidans S1p to grow on carbon disulfide as the main carbon and energy source. Does not show carbonic anhydrase activity (hydration of CO(2) to carbonate). The chain is Carbon disulfide hydrolase from Acidithiobacillus thiooxidans (Thiobacillus thiooxidans).